The sequence spans 390 residues: Phosphoglycerate kinase (390 aa).

Residues 21–23, arginine 36, 59–62, arginine 114, and arginine 147 contribute to the substrate site; these read DLN and HLGR. Residues lysine 198, glutamate 314, and 340-343 contribute to the ATP site; that span reads GGDT.

Belongs to the phosphoglycerate kinase family. In terms of assembly, monomer.

The protein localises to the cytoplasm. It carries out the reaction (2R)-3-phosphoglycerate + ATP = (2R)-3-phospho-glyceroyl phosphate + ADP. Its pathway is carbohydrate degradation; glycolysis; pyruvate from D-glyceraldehyde 3-phosphate: step 2/5. This is Phosphoglycerate kinase from Buchnera aphidicola subsp. Acyrthosiphon pisum (strain 5A).